Here is a 208-residue protein sequence, read N- to C-terminus: Probable transcriptional regulator ycf29 (208 aa).

The Response regulatory domain maps to 11 to 118 (KLILIEPEEH…ELIAIISNLI (108 aa)). Residue aspartate 60 is modified to 4-aspartylphosphate. An HTH luxR-type domain is found at 146–208 (TSFSYINLTV…NRIQILSYFN (63 aa)).

The protein localises to the plastid. It localises to the chloroplast. The protein is Probable transcriptional regulator ycf29 (ycf29) of Guillardia theta (Cryptophyte).